The sequence spans 624 residues: MVMSHIFLISQIQEVEHGDSDDVNWNTDDDELAIDNFQFSPSPVHISATSPNSIQNRISDETVASFVEMGFSTQMIARAIEETAGANMEPMMILETLFNYSASTEASSSKSKVINHFIAMGFPEEHVIKAMQEHGDEDVGEITNALLTYAEVDKLRESEDMNININDDDDDNLYSLSSDDEEDELNNSSNEDRILQALIKMGYLREDAAIAIERCGEDASMEEVVDFICAAQMARQFDEIYAEPDKKELMNNNKKRRTYTETPRKPNTDQLISLPKEMIGFGVPNHPGLMMHRPVPIPDIARGPPFFYYENVAMTPKGVWAKISSHLYDIVPEFVDSKHFCAAARKRGYIHNLPIQNRFQIQPPQHNTIQEAFPLTKRWWPSWDGRTKLNCLLTCIASSRLTEKIREALERYDGETPLDVQKWVMYECKKWNLVWVGKNKLAPLDADEMEKLLGFPRDHTRGGGISTTDRYKSLGNSFQVDTVAYHLSVLKPLFPNGINVLSLFTGIGGGEVALHRLQIKMNVVVSVEISDANRNILRSFWEQTNQKGILREFKDVQKLDDNTIERLMDEYGGFDLVIGGSPCNNLAGGNRHHRVGLGGEHSSLFFDYCRILEAVRRKARHMRR.

UBA domains follow at residues 57–100 (RISD…LFNY) and 108–149 (SSKS…LLTY). Residues 160–189 (DMNININDDDDDNLYSLSSDDEEDELNNSS) form a disordered region. Positions 166–185 (NDDDDDNLYSLSSDDEEDEL) are enriched in acidic residues. In terms of domain architecture, UBA 3 spans 188–231 (SSNEDRILQALIKMGYLREDAAIAIERCGEDASMEEVVDFICAA). The region spanning 291–622 (MHRPVPIPDI…EAVRRKARHM (332 aa)) is the SAM-dependent MTase DRM-type domain.

The protein belongs to the class I-like SAM-binding methyltransferase superfamily. DRM-methyltransferase family.

The protein resides in the nucleus. The catalysed reaction is a 2'-deoxycytidine in DNA + S-adenosyl-L-methionine = a 5-methyl-2'-deoxycytidine in DNA + S-adenosyl-L-homocysteine + H(+). Involved in de novo DNA methylation. Controls asymmetric and CpNpG methylation. Required for FWA gene silencing but not for the maintenance of SUP gene silencing. Functionally redundant to CMT3 to maintain non-CpG methylation. Involved in RNA-directed DNA methylation. The sequence is that of DNA (cytosine-5)-methyltransferase DRM1 (DRM1) from Arabidopsis thaliana (Mouse-ear cress).